The following is a 620-amino-acid chain: Chaperone protein HscA homolog (620 aa).

It belongs to the heat shock protein 70 family.

Its function is as follows. Chaperone involved in the maturation of iron-sulfur cluster-containing proteins. Has a low intrinsic ATPase activity which is markedly stimulated by HscB. The sequence is that of Chaperone protein HscA homolog from Acinetobacter baylyi (strain ATCC 33305 / BD413 / ADP1).